A 221-amino-acid polypeptide reads, in one-letter code: Interleukin-12 subunit alpha (221 aa).

The N-terminal stretch at 1–25 is a signal peptide; it reads MCPLRSLLLLSTLVLLHHLPHLSLG. 3 disulfide bridges follow: Cys39–Cys112, Cys66–Cys198, and Cys87–Cys125. N-linked (GlcNAc...) asparagine glycans are attached at residues Asn41 and Asn95.

The protein belongs to the IL-6 superfamily. In terms of assembly, heterodimer with IL12B; disulfide-linked. This heterodimer is known as interleukin IL-12. Heterodimer with EBI3/IL27B; not disulfide-linked. This heterodimer is known as interleukin IL-35. Interacts with NBR1; this interaction promotes IL-12 secretion.

Its subcellular location is the secreted. Functionally, heterodimerizes with IL12B to form the IL-12 cytokine or with EBI3/IL27B to form the IL-35 cytokine. IL-12 is primarily produced by professional antigen-presenting cells (APCs) such as B-cells and dendritic cells (DCs) as well as macrophages and granulocytes and regulates T-cell and natural killer-cell responses, induces the production of interferon-gamma (IFN-gamma), favors the differentiation of T-helper 1 (Th1) cells and is an important link between innate resistance and adaptive immunity. Mechanistically, exerts its biological effects through a receptor composed of IL12R1 and IL12R2 subunits. Binding to the receptor results in the rapid tyrosine phosphorylation of a number of cellular substrates including the JAK family kinases TYK2 and JAK2. In turn, recruited STAT4 gets phosphorylated and translocates to the nucleus where it regulates cytokine/growth factor responsive genes. As part of IL-35, plays essential roles in maintaining the immune homeostasis of the liver microenvironment and also functions as an immune-suppressive cytokine. Mediates biological events through unconventional receptors composed of IL12RB2 and gp130/IL6ST heterodimers or homodimers. Signaling requires the transcription factors STAT1 and STAT4, which form a unique heterodimer that binds to distinct DNA sites. This chain is Interleukin-12 subunit alpha (IL12A), found in Cervus elaphus (Red deer).